Reading from the N-terminus, the 176-residue chain is 3-hydroxyanthranilate 3,4-dioxygenase (176 aa).

Arg44 is an O2 binding site. 3 residues coordinate Fe cation: His48, Glu54, and His92. Residue Glu54 participates in substrate binding. 2 residues coordinate substrate: Arg96 and Glu106. 4 residues coordinate Fe cation: Cys121, Cys124, Cys158, and Cys161.

This sequence belongs to the 3-HAO family. In terms of assembly, homodimer. The cofactor is Fe(2+).

The enzyme catalyses 3-hydroxyanthranilate + O2 = (2Z,4Z)-2-amino-3-carboxymuconate 6-semialdehyde. Its pathway is cofactor biosynthesis; NAD(+) biosynthesis; quinolinate from L-kynurenine: step 3/3. Its function is as follows. Catalyzes the oxidative ring opening of 3-hydroxyanthranilate to 2-amino-3-carboxymuconate semialdehyde, which spontaneously cyclizes to quinolinate. The polypeptide is 3-hydroxyanthranilate 3,4-dioxygenase (Xanthomonas euvesicatoria pv. vesicatoria (strain 85-10) (Xanthomonas campestris pv. vesicatoria)).